The sequence spans 260 residues: Hydroxyacylglutathione hydrolase (260 aa).

The Zn(2+) site is built by histidine 61, histidine 63, aspartate 65, histidine 66, histidine 119, aspartate 138, and histidine 176.

Belongs to the metallo-beta-lactamase superfamily. Glyoxalase II family. As to quaternary structure, monomer. Requires Zn(2+) as cofactor.

The catalysed reaction is an S-(2-hydroxyacyl)glutathione + H2O = a 2-hydroxy carboxylate + glutathione + H(+). Its pathway is secondary metabolite metabolism; methylglyoxal degradation; (R)-lactate from methylglyoxal: step 2/2. Thiolesterase that catalyzes the hydrolysis of S-D-lactoyl-glutathione to form glutathione and D-lactic acid. This is Hydroxyacylglutathione hydrolase from Brucella anthropi (strain ATCC 49188 / DSM 6882 / CCUG 24695 / JCM 21032 / LMG 3331 / NBRC 15819 / NCTC 12168 / Alc 37) (Ochrobactrum anthropi).